The primary structure comprises 160 residues: Glutathione peroxidase homolog BsaA (160 aa).

C35 is an active-site residue.

It belongs to the glutathione peroxidase family.

The sequence is that of Glutathione peroxidase homolog BsaA (bsaA) from Bacillus subtilis (strain 168).